A 302-amino-acid chain; its full sequence is Citrate lyase subunit beta (302 aa).

Substrate contacts are provided by arginine 69 and glutamate 132. Residues glutamate 132 and aspartate 159 each contribute to the Mg(2+) site.

Belongs to the HpcH/HpaI aldolase family. Citrate lyase beta subunit subfamily. In terms of assembly, oligomer with a subunit composition of (alpha,beta,gamma)6. The cofactor is Mg(2+).

The protein localises to the cytoplasm. The catalysed reaction is citrate = oxaloacetate + acetate. The enzyme catalyses (3S)-citryl-CoA = oxaloacetate + acetyl-CoA. Represents a citryl-ACP lyase. The polypeptide is Citrate lyase subunit beta (citE) (Leuconostoc mesenteroides subsp. cremoris).